A 512-amino-acid chain; its full sequence is D-alanine--D-alanyl carrier protein ligase (512 aa).

152-153 (TS) provides a ligand contact to ATP. Position 199 (D199) interacts with D-alanine. An ATP-binding site is contributed by 294-299 (NAYGPT). V303 serves as a coordination point for D-alanine. ATP is bound by residues D385, 397–400 (YGGR), and K499. K499 is a D-alanine binding site.

This sequence belongs to the ATP-dependent AMP-binding enzyme family. DltA subfamily.

It localises to the cytoplasm. It carries out the reaction holo-[D-alanyl-carrier protein] + D-alanine + ATP = D-alanyl-[D-alanyl-carrier protein] + AMP + diphosphate. It functions in the pathway cell wall biogenesis; lipoteichoic acid biosynthesis. Functionally, catalyzes the first step in the D-alanylation of lipoteichoic acid (LTA), the activation of D-alanine and its transfer onto the D-alanyl carrier protein (Dcp) DltC. In an ATP-dependent two-step reaction, forms a high energy D-alanyl-AMP intermediate, followed by transfer of the D-alanyl residue as a thiol ester to the phosphopantheinyl prosthetic group of the Dcp. D-alanylation of LTA plays an important role in modulating the properties of the cell wall in Gram-positive bacteria, influencing the net charge of the cell wall. This Streptococcus pyogenes serotype M18 (strain MGAS8232) protein is D-alanine--D-alanyl carrier protein ligase.